Consider the following 107-residue polypeptide: Nucleoid-associated protein CE0210 (107 aa).

It belongs to the YbaB/EbfC family. As to quaternary structure, homodimer.

The protein localises to the cytoplasm. It is found in the nucleoid. Its function is as follows. Binds to DNA and alters its conformation. May be involved in regulation of gene expression, nucleoid organization and DNA protection. The protein is Nucleoid-associated protein CE0210 of Corynebacterium efficiens (strain DSM 44549 / YS-314 / AJ 12310 / JCM 11189 / NBRC 100395).